Here is a 316-residue protein sequence, read N- to C-terminus: N-acetylmuramic acid 6-phosphate etherase (316 aa).

The segment at 1 to 25 is disordered; sequence MAVFDPDLQPSSDRGHLLTEQSNQR. Residues 66–229 form the SIS domain; sequence VANRLRAGGR…STAVMVKLGK (164 aa). Glu-94 functions as the Proton donor in the catalytic mechanism. The active site involves Glu-125.

It belongs to the GCKR-like family. MurNAc-6-P etherase subfamily. Homodimer.

It catalyses the reaction N-acetyl-D-muramate 6-phosphate + H2O = N-acetyl-D-glucosamine 6-phosphate + (R)-lactate. Its pathway is amino-sugar metabolism; N-acetylmuramate degradation. Specifically catalyzes the cleavage of the D-lactyl ether substituent of MurNAc 6-phosphate, producing GlcNAc 6-phosphate and D-lactate. In Synechococcus sp. (strain CC9605), this protein is N-acetylmuramic acid 6-phosphate etherase.